The primary structure comprises 408 residues: FAD-dependent monooxygenase nscC (408 aa).

The first 20 residues, 1–20 (MAPPLPILIIGAGISGLTTA), serve as a signal peptide directing secretion. FAD is bound by residues Glu-34 and Ala-45. Residues Asn-91 and Asn-103 are each glycosylated (N-linked (GlcNAc...) asparagine). Arg-119 is a binding site for FAD. Residues Asn-170 and Asn-231 are each glycosylated (N-linked (GlcNAc...) asparagine). Residues Asp-328 and Gly-341 each contribute to the FAD site.

The protein belongs to the paxM FAD-dependent monooxygenase family. Requires FAD as cofactor.

The protein operates within secondary metabolite biosynthesis. FAD-dependent monooxygenase; part of the gene cluster that mediates the biosynthesis of neosartoricin, a prenylated anthracenone that exhibits T-cell antiproliferative activity, suggestive of a physiological role as an immunosuppressive agent. The non-reducing polyketide synthase nscA probably synthesizes and cyclizes the decaketide backbone. The hydrolase nscB then mediates the product release through hydrolysis followed by spontaneous decarboxylation. The prenyltransferase nscD catalyzes the addition of the dimethylallyl group to the aromatic C5. The FAD-dependent monooxygenase nscC is then responsible for the stereospecific hydroxylation at C2. There is no gene encoding O-acetyltransferase in the nsc gene cluster; thus, the last step of 2-O-acetylation leading to neosartoricin may be catalyzed by an unidentified O-acetyltransferase. This Neosartorya fischeri (strain ATCC 1020 / DSM 3700 / CBS 544.65 / FGSC A1164 / JCM 1740 / NRRL 181 / WB 181) (Aspergillus fischerianus) protein is FAD-dependent monooxygenase nscC.